We begin with the raw amino-acid sequence, 578 residues long: DNA primase (578 aa).

The segment at 40 to 64 (CPFHQEKTPSFTVNFEKQFYFCFGC) adopts a CHC2-type zinc-finger fold. The region spanning 257-339 (KQILIVEGYV…GKNVKFIFLP (83 aa)) is the Toprim domain. Residues Glu263, Asp307, and Asp309 each coordinate Mg(2+).

The protein belongs to the DnaG primase family. Monomer. Interacts with DnaB. Zn(2+) serves as cofactor. It depends on Mg(2+) as a cofactor.

It catalyses the reaction ssDNA + n NTP = ssDNA/pppN(pN)n-1 hybrid + (n-1) diphosphate.. Functionally, RNA polymerase that catalyzes the synthesis of short RNA molecules used as primers for DNA polymerase during DNA replication. This Buchnera aphidicola subsp. Baizongia pistaciae (strain Bp) protein is DNA primase.